Here is a 318-residue protein sequence, read N- to C-terminus: Mitochondrial coenzyme A transporter SLC25A42 (318 aa).

Solcar repeat units lie at residues 31–117 (RQVL…YKRI), 129–214 (LPPW…LKSL), and 224–312 (PYPF…MQIL). Helical transmembrane passes span 33 to 53 (VLSS…AVAP), 89 to 109 (LWRG…IQFS), 135 to 155 (LFAG…LDLV), 186 to 206 (LYHG…LSFF), 230 to 250 (MIFG…LDVV), and 293 to 313 (VKGP…QILL).

This sequence belongs to the mitochondrial carrier (TC 2.A.29) family.

It is found in the mitochondrion inner membrane. It catalyses the reaction ADP(out) + CoA(in) = ADP(in) + CoA(out). The catalysed reaction is 3'-dephospho-CoA(in) + ADP(out) = 3'-dephospho-CoA(out) + ADP(in). The enzyme catalyses adenosine 3',5'-bisphosphate(in) + ADP(out) = adenosine 3',5'-bisphosphate(out) + ADP(in). It carries out the reaction AMP(in) + ADP(out) = AMP(out) + ADP(in). It catalyses the reaction dADP(in) + ADP(out) = dADP(out) + ADP(in). The catalysed reaction is ADP(in) + ATP(out) = ADP(out) + ATP(in). Functionally, mitochondrial carrier mediating the transport of coenzyme A (CoA) in mitochondria in exchange for intramitochondrial (deoxy)adenine nucleotides and adenosine 3',5'-diphosphate. The polypeptide is Mitochondrial coenzyme A transporter SLC25A42 (SLC25A42) (Homo sapiens (Human)).